A 552-amino-acid chain; its full sequence is Keratin, type II cytoskeletal 6A (552 aa).

The segment covering 1–14 (MSTKTVIRSQTSHR) has biased composition (polar residues). The tract at residues 1-21 (MSTKTVIRSQTSHRGFSAGSA) is disordered. A head region spans residues 1–151 (MSTKTVIRSQ…DPTIQRVRTE (151 aa)). The segment at 152 to 187 (EREQIKTLNNKFASFIDKVRFLEQQNKVLDTKWALL) is coil 1A. The 314-residue stretch at 152–465 (EREQIKTLNN…TLLEGEECRL (314 aa)) folds into the IF rod domain. A linker 1 region spans residues 188-206 (QEQGTKTVRQGLETLFEQY). The segment at 207–298 (INDLRKELDN…ALYEAELSQM (92 aa)) is coil 1B. The interval 299–322 (QTHISDTSVVLSMDNNRSLDLDSI) is linker 12. The interval 323 to 461 (IAEVKAQYEE…ATYRTLLEGE (139 aa)) is coil 2. The segment at 462 to 552 (ECRLNGEGVG…TSSTRKSYRP (91 aa)) is tail. A disordered region spans residues 524-552 (ISSGLSSSGGSSSTIKYTTTSSTRKSYRP). Over residues 525 to 552 (SSGLSSSGGSSSTIKYTTTSSTRKSYRP) the composition is skewed to low complexity.

It belongs to the intermediate filament family. In terms of assembly, heterodimer of a type I and a type II keratin. KRT6 isomers associate with KRT16 and/or KRT17. Interacts with TCHP.

In terms of biological role, epidermis-specific type I keratin involved in wound healing. Involved in the activation of follicular keratinocytes after wounding, while it does not play a major role in keratinocyte proliferation or migration. Participates in the regulation of epithelial migration by inhibiting the activity of SRC during wound repair. In Rattus norvegicus (Rat), this protein is Keratin, type II cytoskeletal 6A (Krt6a).